The following is a 967-amino-acid chain: RNA polymerase-associated protein RapA (967 aa).

One can recognise a Helicase ATP-binding domain in the interval 163 to 333; the sequence is EVGQRHAPRV…FARLRLLDPN (171 aa). Residue 176 to 183 participates in ATP binding; the sequence is DEVGLGKT. Residues 279-282 carry the DEAH box motif; the sequence is DEAH. The Helicase C-terminal domain occupies 489-677; sequence RVEWLLNYLT…TCRQQHDSLK (189 aa).

The protein belongs to the SNF2/RAD54 helicase family. RapA subfamily. In terms of assembly, interacts with the RNAP. Has a higher affinity for the core RNAP than for the holoenzyme. Its ATPase activity is stimulated by binding to RNAP.

Transcription regulator that activates transcription by stimulating RNA polymerase (RNAP) recycling in case of stress conditions such as supercoiled DNA or high salt concentrations. Probably acts by releasing the RNAP, when it is trapped or immobilized on tightly supercoiled DNA. Does not activate transcription on linear DNA. Probably not involved in DNA repair. The polypeptide is RNA polymerase-associated protein RapA (Pectobacterium atrosepticum (strain SCRI 1043 / ATCC BAA-672) (Erwinia carotovora subsp. atroseptica)).